The chain runs to 643 residues: 1-deoxy-D-xylulose-5-phosphate synthase (643 aa).

Thiamine diphosphate is bound by residues His78 and 119-121 (AHS). Mg(2+) is bound at residue Asp150. Thiamine diphosphate is bound by residues 151–152 (GS), Asn179, Tyr288, and Glu370. Residue Asn179 coordinates Mg(2+).

Belongs to the transketolase family. DXPS subfamily. As to quaternary structure, homodimer. Mg(2+) serves as cofactor. Requires thiamine diphosphate as cofactor.

It catalyses the reaction D-glyceraldehyde 3-phosphate + pyruvate + H(+) = 1-deoxy-D-xylulose 5-phosphate + CO2. The protein operates within metabolic intermediate biosynthesis; 1-deoxy-D-xylulose 5-phosphate biosynthesis; 1-deoxy-D-xylulose 5-phosphate from D-glyceraldehyde 3-phosphate and pyruvate: step 1/1. Catalyzes the acyloin condensation reaction between C atoms 2 and 3 of pyruvate and glyceraldehyde 3-phosphate to yield 1-deoxy-D-xylulose-5-phosphate (DXP). This is 1-deoxy-D-xylulose-5-phosphate synthase from Brucella abortus (strain S19).